The following is a 228-amino-acid chain: NAD(P)H-hydrate epimerase (228 aa).

One can recognise a YjeF N-terminal domain in the interval 9-209 (VRAVERLAHR…LLGLTPAFLA (201 aa)). 53 to 57 (NNGGD) is a (6S)-NADPHX binding site. K(+) contacts are provided by Asn54 and Asp115. (6S)-NADPHX contacts are provided by residues 119–125 (GIGLARP) and Asp148. A K(+)-binding site is contributed by Ser151.

It belongs to the NnrE/AIBP family. K(+) serves as cofactor.

The catalysed reaction is (6R)-NADHX = (6S)-NADHX. The enzyme catalyses (6R)-NADPHX = (6S)-NADPHX. Its function is as follows. Catalyzes the epimerization of the S- and R-forms of NAD(P)HX, a damaged form of NAD(P)H that is a result of enzymatic or heat-dependent hydration. This is a prerequisite for the S-specific NAD(P)H-hydrate dehydratase to allow the repair of both epimers of NAD(P)HX. In Bordetella pertussis (strain CS), this protein is NAD(P)H-hydrate epimerase.